We begin with the raw amino-acid sequence, 361 residues long: NADP-dependent alcohol dehydrogenase 7 (361 aa).

Cysteine 46 is a Zn(2+) binding site. Residues glycine 47 and histidine 51 each coordinate NADP(+). Zn(2+)-binding residues include histidine 68, cysteine 100, cysteine 103, cysteine 106, cysteine 114, and cysteine 164. Positions 189, 191, 192, 211, 212, 216, 251, 253, 256, 276, 300, and 302 each coordinate NADP(+). Phosphoserine is present on serine 316. Arginine 349 is an NADP(+) binding site.

Belongs to the zinc-containing alcohol dehydrogenase family. In terms of assembly, homodimer. The cofactor is Zn(2+).

It carries out the reaction a primary alcohol + NADP(+) = an aldehyde + NADPH + H(+). The catalysed reaction is (E)-cinnamyl alcohol + NADP(+) = (E)-cinnamaldehyde + NADPH + H(+). It catalyses the reaction 3-methylbutanol + NADP(+) = 3-methylbutanal + NADPH + H(+). NADP-dependent alcohol dehydrogenase with a broad substrate specificity. The oxidative reactions are more than 100 times less efficient than the corresponding reductions, suggesting that the enzyme acts as an aldehyde reductase, rather than as an alcohol dehydrogenase. The chain is NADP-dependent alcohol dehydrogenase 7 (ADH7) from Saccharomyces cerevisiae (strain ATCC 204508 / S288c) (Baker's yeast).